The chain runs to 355 residues: UDP-N-acetylglucosamine--N-acetylmuramyl-(pentapeptide) pyrophosphoryl-undecaprenol N-acetylglucosamine transferase (355 aa).

UDP-N-acetyl-alpha-D-glucosamine is bound by residues 14-16 (TGG), asparagine 126, arginine 164, serine 190, isoleucine 243, 262-267 (ALTVAE), and glutamine 288.

The protein belongs to the glycosyltransferase 28 family. MurG subfamily.

The protein localises to the cell inner membrane. It carries out the reaction di-trans,octa-cis-undecaprenyl diphospho-N-acetyl-alpha-D-muramoyl-L-alanyl-D-glutamyl-meso-2,6-diaminopimeloyl-D-alanyl-D-alanine + UDP-N-acetyl-alpha-D-glucosamine = di-trans,octa-cis-undecaprenyl diphospho-[N-acetyl-alpha-D-glucosaminyl-(1-&gt;4)]-N-acetyl-alpha-D-muramoyl-L-alanyl-D-glutamyl-meso-2,6-diaminopimeloyl-D-alanyl-D-alanine + UDP + H(+). Its pathway is cell wall biogenesis; peptidoglycan biosynthesis. In terms of biological role, cell wall formation. Catalyzes the transfer of a GlcNAc subunit on undecaprenyl-pyrophosphoryl-MurNAc-pentapeptide (lipid intermediate I) to form undecaprenyl-pyrophosphoryl-MurNAc-(pentapeptide)GlcNAc (lipid intermediate II). The sequence is that of UDP-N-acetylglucosamine--N-acetylmuramyl-(pentapeptide) pyrophosphoryl-undecaprenol N-acetylglucosamine transferase from Psychromonas ingrahamii (strain DSM 17664 / CCUG 51855 / 37).